The sequence spans 672 residues: MAVIPAKKRGRPRKSVVAEVPYDSLASPVSENSGSKRPRRNASKKAVANFAQLVHAGRDDVINTTQVNNVDDTDDDDFVLNDEGDGEESDNVEIEFENELESTKNEVADLNSSGSGASVRPSGRRNTVQKLRLKKNSTKNMKSSSPGSSLGQKGRPIRLLKDLSSARDKIERIYGLNKEKLLLLAKVKEGFETSVFDFPFKNIQPDSPYFVCLDPPCKKESAYNKVIGDKNRTVYHEINKTEFENMIKLRTKRLKLLIGEVDAEVSTGDKIEFPVLANGKRRGFIYNVGGLVTDIAWLNIEENTDIGKDIQYLAVAVSQYMDEPLNEHLEMFDKEKHSSCIQIFKMNTSTLHCVKVQTIVHSFGEVWDLKWHEGCHAPHLVGCLSFVSQEGTINFLEIIDNATDVHVFKMCEKPSLTLSLADSLITTFDFLSPTTVVCGFKNGFVAEFDLTDPEVPSFYDQVHDSYILSVSTAYSDFEDTVVSTVAVDGYFYIFNPKDIATTKTTVSRFRGSNLVPVVYCPQIYSYIYSDGASSLRAVPSRAAFAVHPLVSRETTITAIGVSRLHPMVLAGSADGSLIITNAARRLLHGIKNSSATQKSLRLWKWDYSIKDDKYRIDSSYEVYPLTVNDVSKAKIDAHGINITCTKWNETSAGGKCYAFSNSAGLLTLEYLS.

Positions 1–158 are required for DNA-binding; the sequence is MAVIPAKKRG…SLGQKGRPIR (158 aa). Positions 6-18 form a DNA-binding region, a.T hook; the sequence is AKKRGRPRKSVVA. 2 disordered regions span residues 24 to 45 and 67 to 156; these read SLASPVSENSGSKRPRRNASKK and VNNV…KGRP. Residues 71–100 show a composition bias toward acidic residues; sequence DDTDDDDFVLNDEGDGEESDNVEIEFENEL. Residues 159-672 are sufficient for interaction with TFC8; the sequence is LLKDLSSARD…AGLLTLEYLS (514 aa). A disulfide bridge links cysteine 375 with cysteine 383.

In terms of assembly, heterodimer with TFC8. Component of the TFIIIC complex composed of TFC1, TFC3, TFC4, TFC6, TFC7 and TFC8. The subunits are organized in two globular domains, tauA and tauB, connected by a proteolysis-sensitive and flexible linker. Interacts with TFC1, TFC3, TFC4 and directly with TFC8.

The protein resides in the nucleus. TFIIIC mediates tRNA and 5S RNA gene activation by binding to intragenic promoter elements. Upstream of the transcription start site, TFIIIC assembles the initiation complex TFIIIB-TFIIIC-tDNA, which is sufficient for RNA polymerase III recruitment and function. Part of the tauB domain of TFIIIC that binds boxB DNA promoter sites of tRNA and similar genes. Cooperates with TFC3 in DNA binding. This chain is Transcription factor tau 91 kDa subunit (TFC6), found in Saccharomyces cerevisiae (strain ATCC 204508 / S288c) (Baker's yeast).